The primary structure comprises 845 residues: Beta-galactosidase 11 (845 aa).

Residues 1–26 (MRKHSLDRWLLTAVLVVLLSSSSSFA) form the signal peptide. An N-linked (GlcNAc...) asparagine glycan is attached at N104. Residue E197 is the Proton donor of the active site. The active-site Nucleophile is the E268. N-linked (GlcNAc...) asparagine glycans are attached at residues N269, N300, N395, N752, N784, and N814. An SUEL-type lectin domain is found at 751-840 (DNVSLTATLK…KMLAVQVKCG (90 aa)).

This sequence belongs to the glycosyl hydrolase 35 family.

The protein localises to the secreted. The protein resides in the extracellular space. It is found in the apoplast. It catalyses the reaction Hydrolysis of terminal non-reducing beta-D-galactose residues in beta-D-galactosides.. The sequence is that of Beta-galactosidase 11 (BGAL11) from Arabidopsis thaliana (Mouse-ear cress).